The chain runs to 431 residues: Galactose-3-O-sulfotransferase 3 (431 aa).

Topologically, residues 1 to 19 (MPPILQRLQQSTKMMSHRK) are cytoplasmic. The chain crosses the membrane as a helical; Signal-anchor for type II membrane protein span at residues 20–40 (ILLLVLGCSTVSLLIHQGSQL). Topologically, residues 41-431 (SWYPKLFPLS…RALPRIPQGT (391 aa)) are lumenal. N-linked (GlcNAc...) asparagine glycans are attached at residues Asn-91, Asn-110, Asn-177, and Asn-302. The disordered stretch occupies residues 400 to 431 (KRRGGVRSRPESVLDNPPPRPIRALPRIPQGT). The segment covering 421 to 431 (IRALPRIPQGT) has biased composition (low complexity).

The protein belongs to the galactose-3-O-sulfotransferase family. It depends on Mg(2+) as a cofactor.

The protein resides in the golgi apparatus. It is found in the golgi stack membrane. It functions in the pathway protein modification; carbohydrate sulfation. Functionally, transfers a sulfate to position 3 of non-reducing beta-galactosyl residues in N-glycans and core2-branched O-glycans. Has high activity towards Gal-beta-1,4-GlcNAc, Gal-beta-1,4(Fuc-alpha-1,3)GlcNAc and lower activity towards Gal-beta-1,3(Fuc-alpha-1,4)GlcNAc. The chain is Galactose-3-O-sulfotransferase 3 (Gal3st3) from Mus musculus (Mouse).